The primary structure comprises 404 residues: Cysteine desulfurase IscS (404 aa).

Residues Ala75–Thr76, Asn155, Gln183, and Ser203–His205 contribute to the pyridoxal 5'-phosphate site. Lys206 is subject to N6-(pyridoxal phosphate)lysine. Thr243 contacts pyridoxal 5'-phosphate. Catalysis depends on Cys328, which acts as the Cysteine persulfide intermediate. Residue Cys328 participates in [2Fe-2S] cluster binding.

It belongs to the class-V pyridoxal-phosphate-dependent aminotransferase family. NifS/IscS subfamily. In terms of assembly, homodimer. Forms a heterotetramer with IscU, interacts with other sulfur acceptors. Requires pyridoxal 5'-phosphate as cofactor.

It localises to the cytoplasm. The enzyme catalyses (sulfur carrier)-H + L-cysteine = (sulfur carrier)-SH + L-alanine. The protein operates within cofactor biosynthesis; iron-sulfur cluster biosynthesis. Its function is as follows. Master enzyme that delivers sulfur to a number of partners involved in Fe-S cluster assembly, tRNA modification or cofactor biosynthesis. Catalyzes the removal of elemental sulfur atoms from cysteine to produce alanine. Functions as a sulfur delivery protein for Fe-S cluster synthesis onto IscU, an Fe-S scaffold assembly protein, as well as other S acceptor proteins. The chain is Cysteine desulfurase IscS from Histophilus somni (strain 2336) (Haemophilus somnus).